Here is a 203-residue protein sequence, read N- to C-terminus: Holliday junction branch migration complex subunit RuvA (203 aa).

The interval 1 to 64 (MIGRLRGIIL…EDAQLLYGFN (64 aa)) is domain I. The segment at 65–142 (NKQERTLFKE…KGLHGDLFTP (78 aa)) is domain II. Positions 143-154 (AADLVLTSPASP) are flexible linker. A domain III region spans residues 155 to 203 (ATDDAEQEAVAALVALGYKPQEASRMVSKIARPDASSETLIREALRAAL).

Belongs to the RuvA family. Homotetramer. Forms an RuvA(8)-RuvB(12)-Holliday junction (HJ) complex. HJ DNA is sandwiched between 2 RuvA tetramers; dsDNA enters through RuvA and exits via RuvB. An RuvB hexamer assembles on each DNA strand where it exits the tetramer. Each RuvB hexamer is contacted by two RuvA subunits (via domain III) on 2 adjacent RuvB subunits; this complex drives branch migration. In the full resolvosome a probable DNA-RuvA(4)-RuvB(12)-RuvC(2) complex forms which resolves the HJ.

The protein resides in the cytoplasm. Functionally, the RuvA-RuvB-RuvC complex processes Holliday junction (HJ) DNA during genetic recombination and DNA repair, while the RuvA-RuvB complex plays an important role in the rescue of blocked DNA replication forks via replication fork reversal (RFR). RuvA specifically binds to HJ cruciform DNA, conferring on it an open structure. The RuvB hexamer acts as an ATP-dependent pump, pulling dsDNA into and through the RuvAB complex. HJ branch migration allows RuvC to scan DNA until it finds its consensus sequence, where it cleaves and resolves the cruciform DNA. This is Holliday junction branch migration complex subunit RuvA from Citrobacter koseri (strain ATCC BAA-895 / CDC 4225-83 / SGSC4696).